A 446-amino-acid chain; its full sequence is NADH-ubiquinone oxidoreductase chain 4 (446 aa).

Transmembrane regions (helical) follow at residues 4 to 24, 56 to 76, 93 to 113, 114 to 134, 141 to 161, 182 to 202, 212 to 232, 245 to 265, 272 to 292, 297 to 317, 330 to 350, 373 to 393, and 426 to 446; these read IILFLLFLTPVCFINNMYWMV, MLSYGLVLLSLWICSLMLLAS, IVILLLLLVLTFSSMSLFMFY, LFFESSLIPTLFLILGWGYQP, VYLLFYTLLVSLPMLIGIFYV, LLYFCLLCAFLVKMPMFLVHL, PVSGSMILAGIMLKLGGYGLL, YSFVWISISLVGGVLMSLVCL, ALIAYSSVAHMGIVLAGLLTM, LCGSYTLMIAHGLCSSGLFCL, MLINKGLLNFMPAMTLWWFLL, IVSWSWISMIMLSFLSFFSAA, and LLHWLPLNLLILKSESCILWL.

This sequence belongs to the complex I subunit 4 family.

The protein resides in the mitochondrion membrane. It carries out the reaction a ubiquinone + NADH + 5 H(+)(in) = a ubiquinol + NAD(+) + 4 H(+)(out). Core subunit of the mitochondrial membrane respiratory chain NADH dehydrogenase (Complex I) that is believed to belong to the minimal assembly required for catalysis. Complex I functions in the transfer of electrons from NADH to the respiratory chain. The immediate electron acceptor for the enzyme is believed to be ubiquinone. The chain is NADH-ubiquinone oxidoreductase chain 4 (mt:ND4) from Drosophila yakuba (Fruit fly).